The following is a 113-amino-acid chain: MKITLSKRIGLLAFLLPCALALSTTVHAETNKLVIESGDSAQSRQHAAMEKEQWNDTRNLRQKVNKRTEKEWDKADAAFDNRDKCEQSANINAYWEPNTLRCLDRRTGRVITP.

Positions 1 to 28 (MKITLSKRIGLLAFLLPCALALSTTVHA) are cleaved as a signal peptide.

This sequence belongs to the UPF0482 family.

The sequence is that of UPF0482 protein YnfB from Shigella flexneri serotype 5b (strain 8401).